Consider the following 58-residue polypeptide: MAGAESDGQFQFTGIKKYFNSYTLTGRMNCVLATYGGIALLVLYFKLRPKKTPAVKAT.

Residues K16 and K17 each carry the N6-acetyllysine modification. The chain crosses the membrane as a helical span at residues 23 to 45; sequence TLTGRMNCVLATYGGIALLVLYF.

Component of the ATP synthase complex composed at least of ATP5F1A/subunit alpha, ATP5F1B/subunit beta, ATP5MC1/subunit c (homooctomer), MT-ATP6/subunit a, MT-ATP8/subunit 8, ATP5ME/subunit e, ATP5MF/subunit f, ATP5MG/subunit g, ATP5MK/subunit k, ATP5MJ/subunit j, ATP5F1C/subunit gamma, ATP5F1D/subunit delta, ATP5F1E/subunit epsilon, ATP5PF/subunit F6, ATP5PB/subunit b, ATP5PD/subunit d, ATP5PO/subunit OSCP. ATP synthase complex consists of a soluble F(1) head domain (subunits alpha(3) and beta(3)) - the catalytic core - and a membrane F(0) domain - the membrane proton channel (subunits c, a, 8, e, f, g, k and j). These two domains are linked by a central stalk (subunits gamma, delta, and epsilon) rotating inside the F1 region and a stationary peripheral stalk (subunits F6, b, d, and OSCP). The ATP synthase complex/complex V exists as a monomeric and a dimeric supercomplex that helps shape mitochondrial cristae to optimize proton flow.

The protein localises to the mitochondrion membrane. Functionally, subunit k, of the mitochondrial membrane ATP synthase complex (F(1)F(0) ATP synthase or Complex V) that produces ATP from ADP in the presence of a proton gradient across the membrane which is generated by electron transport complexes of the respiratory chain. ATP synthase complex consist of a soluble F(1) head domain - the catalytic core - and a membrane F(1) domain - the membrane proton channel. These two domains are linked by a central stalk rotating inside the F(1) region and a stationary peripheral stalk. During catalysis, ATP synthesis in the catalytic domain of F(1) is coupled via a rotary mechanism of the central stalk subunits to proton translocation. In vivo, can only synthesize ATP although its ATP hydrolase activity can be activated artificially in vitro. Part of the complex F(0) domain. Required for dimerization of the ATP synthase complex and as such regulates ATP synthesis in the mitochondria. The chain is ATP synthase F(0) complex subunit k, mitochondrial from Mus musculus (Mouse).